The following is a 243-amino-acid chain: tRNA (guanine-N(1)-)-methyltransferase (243 aa).

S-adenosyl-L-methionine contacts are provided by residues Gly108 and 127–132 (LGDFVL).

The protein belongs to the RNA methyltransferase TrmD family. In terms of assembly, homodimer.

It localises to the cytoplasm. It catalyses the reaction guanosine(37) in tRNA + S-adenosyl-L-methionine = N(1)-methylguanosine(37) in tRNA + S-adenosyl-L-homocysteine + H(+). Its function is as follows. Specifically methylates guanosine-37 in various tRNAs. The sequence is that of tRNA (guanine-N(1)-)-methyltransferase from Streptococcus pyogenes serotype M5 (strain Manfredo).